The following is a 462-amino-acid chain: Protein Tube (462 aa).

Residues 27-152 (YSRNTELRRV…SAADFVALDF (126 aa)) enclose the Death domain. The interval 218–265 (RDKSVPQPSGNTPPIAPPRRQQRSTTNSNFATLTGTGTTSTTIPNVPN) is disordered. A compositionally biased stretch (low complexity) spans 249 to 259 (TLTGTGTTSTT). A run of 2 repeats spans residues 262 to 269 (NVPNLTIL) and 286 to 293 (NIPDLSIL). Residues 262–460 (NVPNLTILNP…ACNIPDLSEL (199 aa)) form a 5 X approximate repeats region. Over residues 301–317 (RATVSDNPSNRTSSTDP) the composition is skewed to polar residues. Residues 301–462 (RATVSDNPSN…NIPDLSELQQ (162 aa)) are disordered. Repeat unit 3 spans residues 319–326 (NIPRITLL). The segment covering 342–354 (AKASTATTSTASS) has biased composition (low complexity). Positions 355–367 (NNLPMISALNISK) are enriched in polar residues. Residues 356-363 (NLPMISAL) form repeat 4. The span at 368–377 (GSRETLRPES) shows a compositional bias: basic and acidic residues. Residues 387–403 (DDDDDNDGEEDGEEEYP) are compositionally biased toward acidic residues. The span at 409-424 (NLSNSEQQSSNNDSSL) shows a compositional bias: low complexity. Over residues 425-438 (TTVTGTSGDNSFEL) the composition is skewed to polar residues. The segment covering 439–449 (TNDSSSTSNDD) has biased composition (low complexity). Repeat 5 spans residues 453–460 (NIPDLSEL).

As to quaternary structure, interacts (via Death domain) with pll (via Death domain). Phosphorylated by pll.

The protein resides in the cytoplasm. It localises to the cell membrane. In terms of biological role, plays an essential role in the Tl receptor signaling pathway that establishes embryonic dorsoventral polarity; the signal directs import of dl into ventral and ventrolateral nuclei, thereby establishing dorsoventral polarity. Tub recruits pll to the plasma membrane and protein-protein interaction activates pll. Also has a role in pupal pattern formation. The chain is Protein Tube (tub) from Drosophila melanogaster (Fruit fly).